A 131-amino-acid polypeptide reads, in one-letter code: U-scoloptoxin-Er5e (131 aa).

A signal peptide spans 1 to 22 (MKTNCEFPLLCLLIVLVANVEG). Residues 23–94 (EVEDNELKMV…KRLWRNWERR (72 aa)) constitute a propeptide that is removed on maturation. RLWRNWE repeat units lie at residues 34-40 (RLWRNWE), 61-67 (RLWRNWE), and 86-92 (RLWRNWE). At Gln95 the chain carries Pyrrolidone carboxylic acid. The RLWRNWE 4; approximate repeat unit spans residues 107 to 113 (ELWRNWE). Positions 112 to 131 (WEDLKRRQVVDLNDEQKTTG) are excised as a propeptide.

It belongs to the scoloptoxin-08 family. Expressed by the venom gland.

The protein localises to the secreted. This Ethmostigmus rubripes (Giant centipede) protein is U-scoloptoxin-Er5e.